The primary structure comprises 1285 residues: Ataxin-2 (1285 aa).

3 disordered regions span residues 1 to 85, 111 to 178, and 197 to 224; these read MRSS…PGSR, ARAC…SPGA, and PVAS…GLPQ. Basic residues predominate over residues 29 to 38; it reads SLPRTARRGG. The segment covering 48 to 65 has biased composition (pro residues); it reads AGPPPRGPGAPPRGPRSP. Residues 128-144 show a composition bias toward low complexity; sequence SSSARPAPGCPRPACEP. Over residues 205–214 the composition is skewed to gly residues; it reads AGGGRPGLGR. Residues Ser218 and Ser219 each carry the phosphoserine modification. In terms of domain architecture, Sm spans 237-314; the sequence is RMVHILTSVV…FVVVQFKDTD (78 aa). Phosphoserine is present on residues Ser362 and Ser435. Composition is skewed to basic and acidic residues over residues 428–440 and 447–461; these read ALEN…EEKY and CSDR…RDNK. Disordered stretches follow at residues 428–925 and 1111–1191; these read ALEN…HQQP and AALH…QSSF. Position 477 is a phosphoserine (Ser477). Residues 498 to 510 are compositionally biased toward polar residues; sequence ASHTSDFNPNAGS. Phosphoserine is present on Ser523. Low complexity predominate over residues 526–552; the sequence is PSHSSRPPSRYQSGPNSLPPRAATHTR. Positions 554–567 are enriched in pro residues; that stretch reads PSRPPSRPSRPPSH. Ser593 is subject to Phosphoserine. Residues 596–606 are compositionally biased toward basic residues; it reads AQRHPRNHRVS. Asymmetric dimethylarginine; alternate is present on Arg609. An Omega-N-methylarginine; alternate modification is found at Arg609. Ser611 and Ser653 each carry phosphoserine. Positions 662–672 are enriched in polar residues; it reads PRQSSIGNSPS. Residues 685–694 show a composition bias toward low complexity; it reads PAEAVSMPVP. A Phosphoserine modification is found at Ser697. Residue Thr710 is modified to Phosphothreonine. Residues 737–746 show a composition bias toward polar residues; sequence ASETSPSFSK. Phosphoserine is present on residues Ser741 and Ser753. Basic and acidic residues predominate over residues 757–773; that stretch reads SEHRKQIDDLKKFKNDF. Over residues 776-789 the composition is skewed to polar residues; that stretch reads QPSSTSESMDQLLS. The span at 790-813 shows a compositional bias: basic and acidic residues; it reads KNREGEKSRDLIKDKTEASAKDSF. Over residues 814-838 the composition is skewed to low complexity; sequence IDSSSSSSNCTSGSSKTNSPSISPS. Ser827, Ser828, Ser832, Ser836, Ser838, Ser859, and Ser860 each carry phosphoserine. Over residues 851–862 the composition is skewed to polar residues; the sequence is VTSQGVQTSSPA. Lys864 is covalently cross-linked (Glycyl lysine isopeptide (Lys-Gly) (interchain with G-Cter in SUMO2)). Residues 864–881 show a composition bias toward basic and acidic residues; it reads KQEKDDREEKKDTTEQVR. Low complexity-rich tracts occupy residues 896–907 and 1128–1165; these read SFSQPKPSTTPT and GQQQ…QQSA.

Belongs to the ataxin-2 family. In terms of assembly, interacts with RBFOX1. Monomer. Can also form homodimers. Interacts with polyribosomes. Interacts with EGFR. Interacts with SH3GL3. Interacts with SH3GL2, SH3KBP1 and CBL. Interacts with ATXN2L. As to expression, expressed in the heart, lung, liver, kidney, skeletal muscle, spleen and intestine. Predominant expression was seen in the brain where a high level expression was found in the pyramidal cortical neurons, large brain stem neurons and cerebellar Purkinje cells. All three isoforms were found in all the tissues except skeletal muscle where only isoform 1 was found.

Its subcellular location is the cytoplasm. Its function is as follows. Involved in EGFR trafficking, acting as negative regulator of endocytic EGFR internalization at the plasma membrane. The chain is Ataxin-2 (Atxn2) from Mus musculus (Mouse).